A 252-amino-acid polypeptide reads, in one-letter code: Coenzyme F420:L-glutamate ligase (252 aa).

GTP-binding positions include 12–15 (VPLE), 44–45 (HT), and lysine 49. Aspartate 114 lines the a divalent metal cation pocket. GTP is bound at residue asparagine 117. Residues aspartate 155, threonine 156, and glutamine 213 each contribute to the a divalent metal cation site. 211-218 (MGQADEGT) contacts GTP.

This sequence belongs to the CofE family. In terms of assembly, homodimer. Requires Mg(2+) as cofactor. The cofactor is Mn(2+). K(+) serves as cofactor.

The enzyme catalyses oxidized coenzyme F420-0 + GTP + L-glutamate = oxidized coenzyme F420-1 + GDP + phosphate + H(+). It carries out the reaction oxidized coenzyme F420-1 + GTP + L-glutamate = oxidized coenzyme F420-2 + GDP + phosphate + H(+). It functions in the pathway cofactor biosynthesis; coenzyme F420 biosynthesis. In terms of biological role, catalyzes the GTP-dependent successive addition of two or more gamma-linked L-glutamates to the L-lactyl phosphodiester of 7,8-didemethyl-8-hydroxy-5-deazariboflavin (F420-0) to form coenzyme F420-0-glutamyl-glutamate (F420-2) or polyglutamated F420 derivatives. In Methanopyrus kandleri (strain AV19 / DSM 6324 / JCM 9639 / NBRC 100938), this protein is Coenzyme F420:L-glutamate ligase.